Consider the following 137-residue polypeptide: 6,7-dimethyl-8-ribityllumazine synthase (137 aa).

5-amino-6-(D-ribitylamino)uracil is bound by residues F11, 43–45 (SFD), and 67–69 (CVI). 72–73 (DT) lines the (2S)-2-hydroxy-3-oxobutyl phosphate pocket. H75 functions as the Proton donor in the catalytic mechanism. L100 serves as a coordination point for 5-amino-6-(D-ribitylamino)uracil. R115 lines the (2S)-2-hydroxy-3-oxobutyl phosphate pocket.

Belongs to the DMRL synthase family. In terms of assembly, forms an icosahedral capsid composed of 60 subunits, arranged as a dodecamer of pentamers.

It catalyses the reaction (2S)-2-hydroxy-3-oxobutyl phosphate + 5-amino-6-(D-ribitylamino)uracil = 6,7-dimethyl-8-(1-D-ribityl)lumazine + phosphate + 2 H2O + H(+). It functions in the pathway cofactor biosynthesis; riboflavin biosynthesis; riboflavin from 2-hydroxy-3-oxobutyl phosphate and 5-amino-6-(D-ribitylamino)uracil: step 1/2. Catalyzes the formation of 6,7-dimethyl-8-ribityllumazine by condensation of 5-amino-6-(D-ribitylamino)uracil with 3,4-dihydroxy-2-butanone 4-phosphate. This is the penultimate step in the biosynthesis of riboflavin. The polypeptide is 6,7-dimethyl-8-ribityllumazine synthase (Methanococcus maripaludis (strain C5 / ATCC BAA-1333)).